The following is a 202-amino-acid chain: Peptide methionine sulfoxide reductase A1 (202 aa).

The disordered stretch occupies residues 1–20 (MNILNKLGIGSSRQTNMDPS). At Ser189 the chain carries Phosphoserine.

Belongs to the MsrA Met sulfoxide reductase family.

The protein resides in the cytoplasm. It is found in the cytosol. It catalyses the reaction L-methionyl-[protein] + [thioredoxin]-disulfide + H2O = L-methionyl-(S)-S-oxide-[protein] + [thioredoxin]-dithiol. The enzyme catalyses [thioredoxin]-disulfide + L-methionine + H2O = L-methionine (S)-S-oxide + [thioredoxin]-dithiol. Its function is as follows. Catalyzes the reduction of methionine sulfoxide (MetSO) to methionine in proteins. Plays a protective role against oxidative stress by restoring activity to proteins that have been inactivated by methionine oxidation. MSRA family specifically reduces the MetSO S-enantiomer. The protein is Peptide methionine sulfoxide reductase A1 (MSRA1) of Arabidopsis thaliana (Mouse-ear cress).